A 153-amino-acid chain; its full sequence is Ribosome maturation factor RimP (153 aa).

This sequence belongs to the RimP family.

It is found in the cytoplasm. In terms of biological role, required for maturation of 30S ribosomal subunits. In Chromohalobacter salexigens (strain ATCC BAA-138 / DSM 3043 / CIP 106854 / NCIMB 13768 / 1H11), this protein is Ribosome maturation factor RimP.